A 164-amino-acid polypeptide reads, in one-letter code: ATP synthase subunit b (164 aa).

Residues 4–24 traverse the membrane as a helical segment; it reads IHFDLTLVVQVLSFLLLVYIL.

This sequence belongs to the ATPase B chain family. In terms of assembly, F-type ATPases have 2 components, F(1) - the catalytic core - and F(0) - the membrane proton channel. F(1) has five subunits: alpha(3), beta(3), gamma(1), delta(1), epsilon(1). F(0) has three main subunits: a(1), b(2) and c(10-14). The alpha and beta chains form an alternating ring which encloses part of the gamma chain. F(1) is attached to F(0) by a central stalk formed by the gamma and epsilon chains, while a peripheral stalk is formed by the delta and b chains.

The protein localises to the cell membrane. F(1)F(0) ATP synthase produces ATP from ADP in the presence of a proton or sodium gradient. F-type ATPases consist of two structural domains, F(1) containing the extramembraneous catalytic core and F(0) containing the membrane proton channel, linked together by a central stalk and a peripheral stalk. During catalysis, ATP synthesis in the catalytic domain of F(1) is coupled via a rotary mechanism of the central stalk subunits to proton translocation. Functionally, component of the F(0) channel, it forms part of the peripheral stalk, linking F(1) to F(0). In Desulfitobacterium hafniense (strain Y51), this protein is ATP synthase subunit b.